A 1627-amino-acid polypeptide reads, in one-letter code: MAKSGGGGGGGGGGGGGGGGSGGLTCVTLFDNQINASKKEESESVNKNDTSKKMSVERVYQKKTQLEHILLRPDTYIGSVEPLTQLMWVYDEDVGMNCREVTFVPGLYKIFDEILVNAADNKQRDKNMTCIKISIDPESNIISIWNNGKGIPVVEHKVEKVYVPALIFGQLLTSSNYDDDEKKVTGGRNGYGAKLCNIFSTKFTVETACKEYKHSFKQTWMNNMMKTSEPKIKHFEGDDYTCITFQPDLSKFKMENLDKDIVSLMTRRAYDLAGSCKGVKVMLNGKKLPVNGFRSYVDLYVKDKLDETGVALKVIHEVVNERWDVCLTLSEKGFQQISFVNSIATTKGGRHVDYVVDQVVGKLIEVVKKKNKAGVSVKPFQVKNHIWVFVNCLIENPSFDSQTKENMTLQPKSFGSKCQLSEKFFKAASNCGIIESILNWVKFKAQTQLNKKCSSVKHSKIKGIPKLDDANDAGGKHSLDCTLILTEGDSAKSLAVSGLGVIGRDRYGVFPLRGKILNVREASHKQIMENAEINNIIKIVGLQYKKSYEDPESLKSLRYGKIMIMTDQDQDGSHIKGLLINFIHHNWPSLLKHGFLEEFITPIVKASKNKQELSFYSIPEFDEWKKHMENHKAWKIKYYKGLGTSTAKEAKEYFADMERHRILFRYAGPEDDAAITLAFSKKKIDDRKEWLTNFMEDRRQRRLHGLPEQFLYGTATKHLTYNDFINKELILFSNSDNERSIPSLVDGLKPGQRKVLFTCFKRNDKREVKVAQLAGSVAEMSAYHHGEQALMMTIVNLAQNFVGSNNVNLLQPIGQFGTRLHGGKDAASPRYIFTMLSPLARLLFPSVDDNLLKFLYDDNQRVEPEWYIPIIPMVLVNGAEGIGTGWACKLPNYDTREIVNNVRRMLDGLDPHPMLPNYKNFRGTIQELGQNQYVVSGEIFVVDRNTVEITELPVRTWTQVYKEQVLEPMLNGTEKTPALISDYKEYHTDTTVKFVVKMTEEKLAQAEAAGLHKVFKLQTSLTCNSMVLFDHMGCLKKYETVQDILKEFFDLRLHYYSLRKEWLVGMLGAESTKLNNQARFILEKIQGKITIENRSKRDLIQMLVQRGYESDPVKAWKEAQEKAAEEEDPQNANDDASSASGSTSGPDFNYILNMSLWSLTKEKVEELIKHRDSKERELNDLKRKSASDLWKEDLAAFVEELEKVEAQEREDVLAGMVGKPIKGKVGKPKMKKLQLEETMPSPFGRRIVPQITSAMKADASRKLLKKKKGDADSVAIKMEFDEEFGGVQAEGGGDDTVNTAASGTKTPKLKREKKEPGTRVRRAPSSTKSSAKKVKKRNPWSDDESKSESDLEESEPVIIPRDSLLRRAAADRAKYTFDFSKEEDDAHDDDDANNNNDLDELKVKASPVINDREDEFVPSDSVEKDEYDFSPVKSKPSPEKMSQEKKNQDFGNIFSFPSYSQKTDDDTTKLDSDEEDSTPVFSSPFAPKQTEKMLSKTVAAKKAKVDVPPKPKRAPKAKKMETVNSDSDSEFGIPKKTAAPKGKGRGAKKRKTSGSENEGEYNPGKKAPKSTPCKKSKKAAFDQDSDVEIFQSGFASETAPKPRTGRARKEVKYFAESDEDDDFDMFN.

Residues asparagine 117, asparagine 146, serine 174 to asparagine 176, and glycine 187 to lysine 194 each bind ATP. The segment at lysine 368 to lysine 370 is interaction with DNA. Glutamine 402–lysine 404 contributes to the ATP binding site. The Toprim domain occupies cysteine 481–glutamate 598. Mg(2+)-binding residues include glutamate 487, aspartate 567, and aspartate 569. The Topo IIA-type catalytic domain occupies isoleucine 741–leucine 1194. Residue tyrosine 831 is the O-(5'-phospho-DNA)-tyrosine intermediate of the active site. Residues lysine 1016–serine 1025 form an interaction with DNA region. 4 disordered regions span residues alanine 1115 to serine 1144, lysine 1224 to valine 1248, glutamate 1283 to leucine 1365, and aspartate 1378 to asparagine 1627. The span at asparagine 1131–serine 1144 shows a compositional bias: low complexity. A compositionally biased stretch (polar residues) spans threonine 1296–lysine 1305. Over residues proline 1339 to serine 1349 the composition is skewed to basic and acidic residues. 2 stretches are compositionally biased toward acidic residues: residues lysine 1381–alanine 1392 and arginine 1412–aspartate 1428. Composition is skewed to basic and acidic residues over residues proline 1436–glutamine 1448 and lysine 1462–aspartate 1471. Composition is skewed to basic residues over residues glycine 1542 to threonine 1552 and lysine 1566 to lysine 1578. Over residues glutamate 1616–asparagine 1627 the composition is skewed to acidic residues.

It belongs to the type II topoisomerase family. Homodimer. Requires Mg(2+) as cofactor. Mn(2+) is required as a cofactor. It depends on Ca(2+) as a cofactor.

It localises to the nucleus. It is found in the nucleolus. The protein resides in the nucleoplasm. It catalyses the reaction ATP-dependent breakage, passage and rejoining of double-stranded DNA.. Its function is as follows. Key decatenating enzyme that alters DNA topology by binding to two double-stranded DNA molecules, generating a double-stranded break in one of the strands, passing the intact strand through the broken strand, and religating the broken strand. Plays a role in B-cell differentiation. This Gallus gallus (Chicken) protein is DNA topoisomerase 2-beta (TOP2B).